The chain runs to 262 residues: Tryptophan synthase alpha chain (262 aa).

Active-site proton acceptor residues include Glu49 and Asp60.

This sequence belongs to the TrpA family. In terms of assembly, tetramer of two alpha and two beta chains.

The catalysed reaction is (1S,2R)-1-C-(indol-3-yl)glycerol 3-phosphate + L-serine = D-glyceraldehyde 3-phosphate + L-tryptophan + H2O. It participates in amino-acid biosynthesis; L-tryptophan biosynthesis; L-tryptophan from chorismate: step 5/5. In terms of biological role, the alpha subunit is responsible for the aldol cleavage of indoleglycerol phosphate to indole and glyceraldehyde 3-phosphate. The sequence is that of Tryptophan synthase alpha chain from Thermoanaerobacter pseudethanolicus (strain ATCC 33223 / 39E) (Clostridium thermohydrosulfuricum).